The following is a 108-amino-acid chain: Small ribosomal subunit protein eS25A (108 aa).

Residues 1–20 are compositionally biased toward low complexity; it reads MPPKQQLSKAAKAAAALAGG. Residues 1–30 form a disordered region; the sequence is MPPKQQLSKAAKAAAALAGGKKSKKKWSKK. Position 2 is a n,N-dimethylproline; by NTM1 (Pro2). A compositionally biased stretch (basic residues) spans 21-30; the sequence is KKSKKKWSKK.

This sequence belongs to the eukaryotic ribosomal protein eS25 family. As to quaternary structure, component of the small ribosomal subunit (SSU). Mature yeast ribosomes consist of a small (40S) and a large (60S) subunit. The 40S small subunit contains 1 molecule of ribosomal RNA (18S rRNA) and 33 different proteins (encoded by 57 genes). The large 60S subunit contains 3 rRNA molecules (25S, 5.8S and 5S rRNA) and 46 different proteins (encoded by 81 genes).

It localises to the cytoplasm. Functionally, component of the ribosome, a large ribonucleoprotein complex responsible for the synthesis of proteins in the cell. The small ribosomal subunit (SSU) binds messenger RNAs (mRNAs) and translates the encoded message by selecting cognate aminoacyl-transfer RNA (tRNA) molecules. The large subunit (LSU) contains the ribosomal catalytic site termed the peptidyl transferase center (PTC), which catalyzes the formation of peptide bonds, thereby polymerizing the amino acids delivered by tRNAs into a polypeptide chain. The nascent polypeptides leave the ribosome through a tunnel in the LSU and interact with protein factors that function in enzymatic processing, targeting, and the membrane insertion of nascent chains at the exit of the ribosomal tunnel. The protein is Small ribosomal subunit protein eS25A of Saccharomyces cerevisiae (strain ATCC 204508 / S288c) (Baker's yeast).